The primary structure comprises 297 residues: Probable lipid kinase YegS-like (297 aa).

Residues 2 to 131 (STFPASLLIL…IDIARVNDKT (130 aa)) enclose the DAGKc domain. ATP contacts are provided by residues threonine 40, 66-72 (GDGTINE), and threonine 93. Leucine 213, aspartate 216, and leucine 218 together coordinate Mg(2+). Catalysis depends on glutamate 269, which acts as the Proton acceptor.

The protein belongs to the diacylglycerol/lipid kinase family. YegS lipid kinase subfamily. Mg(2+) is required as a cofactor. Requires Ca(2+) as cofactor.

It is found in the cytoplasm. In terms of biological role, probably phosphorylates lipids; the in vivo substrate is unknown. The chain is Probable lipid kinase YegS-like from Klebsiella pneumoniae (strain 342).